Reading from the N-terminus, the 326-residue chain is D-alanine--D-alanine ligase (326 aa).

In terms of domain architecture, ATP-grasp spans Ile121 to Glu320. Val149 to Ser204 serves as a coordination point for ATP. The Mg(2+) site is built by Glu275, Glu287, and Asn289.

This sequence belongs to the D-alanine--D-alanine ligase family. It depends on Mg(2+) as a cofactor. Mn(2+) serves as cofactor.

The protein resides in the cytoplasm. The enzyme catalyses 2 D-alanine + ATP = D-alanyl-D-alanine + ADP + phosphate + H(+). It participates in cell wall biogenesis; peptidoglycan biosynthesis. Cell wall formation. This is D-alanine--D-alanine ligase from Christiangramia forsetii (strain DSM 17595 / CGMCC 1.15422 / KT0803) (Gramella forsetii).